The sequence spans 290 residues: 4-hydroxybenzoate octaprenyltransferase (290 aa).

6 consecutive transmembrane segments (helical) span residues 41–61, 89–109, 133–153, 158–178, 202–224, and 269–289; these read WPLV…GCAM, WEAV…ILPL, FFAI…PMAF, GTVP…SVAY, FGRF…YAWI, and WLGG…GAAG.

Belongs to the UbiA prenyltransferase family. Requires Mg(2+) as cofactor.

It localises to the cell inner membrane. The enzyme catalyses all-trans-octaprenyl diphosphate + 4-hydroxybenzoate = 4-hydroxy-3-(all-trans-octaprenyl)benzoate + diphosphate. It participates in cofactor biosynthesis; ubiquinone biosynthesis. In terms of biological role, catalyzes the prenylation of para-hydroxybenzoate (PHB) with an all-trans polyprenyl group. Mediates the second step in the final reaction sequence of ubiquinone-8 (UQ-8) biosynthesis, which is the condensation of the polyisoprenoid side chain with PHB, generating the first membrane-bound Q intermediate 3-octaprenyl-4-hydroxybenzoate. This is 4-hydroxybenzoate octaprenyltransferase from Burkholderia vietnamiensis (strain G4 / LMG 22486) (Burkholderia cepacia (strain R1808)).